Here is a 198-residue protein sequence, read N- to C-terminus: Nucleoid occlusion factor SlmA (198 aa).

One can recognise an HTH tetR-type domain in the interval 10–70 (NRREEILQSL…SLIEFIEDSL (61 aa)). Residues 33–52 (TTAKLAASVGVSEAALYRHF) constitute a DNA-binding region (H-T-H motif). The stretch at 117 to 144 (EQDRLQGRINQLFERIEAQLRQVLREKR) forms a coiled coil.

It belongs to the nucleoid occlusion factor SlmA family. Homodimer. Interacts with FtsZ.

It localises to the cytoplasm. The protein resides in the nucleoid. Its function is as follows. Required for nucleoid occlusion (NO) phenomenon, which prevents Z-ring formation and cell division over the nucleoid. Acts as a DNA-associated cell division inhibitor that binds simultaneously chromosomal DNA and FtsZ, and disrupts the assembly of FtsZ polymers. SlmA-DNA-binding sequences (SBS) are dispersed on non-Ter regions of the chromosome, preventing FtsZ polymerization at these regions. The chain is Nucleoid occlusion factor SlmA from Escherichia coli (strain 55989 / EAEC).